The chain runs to 118 residues: DNA-binding protein inhibitor ID-3 (118 aa).

The 53-residue stretch at 32-84 (SHKGPGVDEPMGLLYDMNGCYSKLKELVPGIPQGSKLSQVEILQHVIDYIFDL) folds into the bHLH domain.

In terms of assembly, homodimer. Heterodimer with other HLH proteins. Interacts (via HLH domain) with the bHLH protein hes4/hairy2 (via Orange domain). Interacts with stat3.

It localises to the nucleus. In terms of biological role, transcriptional regulator (lacking a basic DNA binding domain) which negatively regulates the basic helix-loop-helix (bHLH) transcription factors by forming heterodimers and inhibiting their DNA binding and transcriptional activity. Influences cell fate decisions in the embryo by sequestering and blocking the activity of the bHLH transcription factors that control these decisions. Inhibits the binding of myogenic bHLH-containing complexes to E-box DNA, thereby preventing activation of muscle-specific target genes. Also inhibits the activity of neurogenic factor neurod1/neuroD. Plays a role in cell cycle progression and survival of neural crest progenitors; binding to either hes4-B/hairy2b or stat3 blocks the formation of transcription factor complexes and the repressor function of hes4-B/hairy2B, to allow neural crest progenitors to differentiate. May play a role in the regulation of the circadian rhythm. The polypeptide is DNA-binding protein inhibitor ID-3 (id3) (Xenopus tropicalis (Western clawed frog)).